The following is a 645-amino-acid chain: DEAD-box ATP-dependent RNA helicase 46 (645 aa).

2 disordered regions span residues 1–22 (MAAT…KPWK) and 44–137 (YERP…AGNE). Positions 15–49 (PNLPKPWKGLVDSRTGYLYFWNPETNVTQYERPAS) constitute a WW domain. Positions 60-72 (VSSSVQTNQQSSS) are enriched in low complexity. A compositionally biased stretch (basic and acidic residues) spans 77–91 (GKEDDKYGRGSDGPK). The segment covering 108–136 (SSNDAASGLGNASSGGSSARGPPSSAAGN) has biased composition (low complexity). A Q motif motif is present at residues 161–189 (MSFEATGLPNELLREVYSAGFSAPSPIQA). One can recognise a Helicase ATP-binding domain in the interval 192 to 366 (WPIAMQNRDI…ADLLVNPAQV (175 aa)). 205–212 (AKTGSGKT) serves as a coordination point for ATP. Residues 314 to 317 (DEAD) carry the DEAD box motif. In terms of domain architecture, Helicase C-terminal spans 395 to 539 (RLEQILRSQE…KVPPQVREMA (145 aa)). The interval 532–645 (PPQVREMATR…FHEAMMMKNR (114 aa)) is disordered. A compositionally biased stretch (gly residues) spans 556–597 (SSGGGGGRGGYGDSGYGGRGESGYGSRGDSGYGGRGDSGGRG). Over residues 598-608 (SWAPSRDSSGS) the composition is skewed to low complexity. Basic and acidic residues predominate over residues 612 to 623 (GRERSRSPERFR). Residues 624–634 (GGPPSTSSPPR) show a composition bias toward low complexity.

It belongs to the DEAD box helicase family. DDX5/DBP2 subfamily.

It carries out the reaction ATP + H2O = ADP + phosphate + H(+). In Arabidopsis thaliana (Mouse-ear cress), this protein is DEAD-box ATP-dependent RNA helicase 46 (RH46).